The chain runs to 542 residues: Major facilitator superfamily domain-containing protein 6-like (542 aa).

Helical transmembrane passes span 46–66, 89–109, 198–218, 246–266, 272–292, 321–341, 352–372, 381–401, 404–424, 444–464, and 469–489; these read LGLSAAMIGIIMASKHLLALL, LLSSALVVLPLLLFPSAGILV, MFFLVLLVTALWEFVAVPLEW, VGAAFGSCLVGVLVTNLFCRI, FYSYTVLMILTVPASALLPIY, VTVILTGMVTSAVSDFLLWLM, GICLALAHLSHTGFSPIAGPL, WMLVLAVVGLAMQCLYYSFLW, WAVMPAQLLAGFSTGALWWSV, FEAFSLDMGAALGSLIAGFVV, and VNVLFQGASVMLAVWSSALAV.

The protein belongs to the major facilitator superfamily. MFSD6 family.

The protein localises to the membrane. This is Major facilitator superfamily domain-containing protein 6-like (mfsd6l) from Danio rerio (Zebrafish).